A 614-amino-acid chain; its full sequence is Leucine-rich repeat and immunoglobulin-like domain-containing nogo receptor-interacting protein 1 (614 aa).

The signal sequence occupies residues 1–35 (MLAGGVRSMPSPLLACWQPILLLVLGSVLSGSATG). Cystine bridges form between Cys36–Cys42 and Cys40–Cys51. An LRRNT domain is found at 36–65 (CPPRCECSAQDRAVLCHRKRFVAVPEGIPT). The Extracellular segment spans residues 36 to 555 (CPPRCECSAQ…FDIKTLIIAT (520 aa)). LRR repeat units follow at residues 66–87 (ETRL…EFAS), 90–111 (HLEE…AFNN), 114–135 (NLRT…VFTG), 138–159 (NLTK…MFQD), 162–183 (NLKS…AFSG), 186–207 (SLEQ…ALSH), 210–231 (GLIV…SFKR), 258–279 (NLTS…AVRH), 282–303 (YLRF…MLHE), 306–327 (RLQE…AFRG), and 330–351 (YLRV…VFHS). Residue Asn138 is glycosylated (N-linked (GlcNAc...) asparagine). Residue Asn196 is glycosylated (N-linked (GlcNAc...) asparagine). Asn258, Asn268, and Asn287 each carry an N-linked (GlcNAc...) asparagine glycan. Asn335 carries N-linked (GlcNAc...) asparagine glycosylation. The LRRCT domain occupies 363–417 (NPLACDCRLLWVFRRRWRLNFNRQQPTCATPEFVQGKEFKDFPDVLLPNYFTCRR). 3 disulfide bridges follow: Cys367-Cys390, Cys369-Cys415, and Cys440-Cys491. Positions 405 to 507 (PDVLLPNYFT…GNDSMPAHLH (103 aa)) constitute an Ig-like C2-type domain. N-linked (GlcNAc...) asparagine glycans are attached at residues Asn486 and Asn536. Residues 556-576 (TMGFISFLGVVLFCLVLLFLW) traverse the membrane as a helical segment. Over 577 to 614 (SRGKGNTKHNIEIEYVPRKSDAGISSADAPRKFNMKMI) the chain is Cytoplasmic. Ser596 is modified (phosphoserine).

Homotetramer. Forms a ternary complex with RTN4R/NGFR and RTN4R/TNFRSF19. Interacts with NGRF, RTN4R and MYT1L. N-glycosylated. Contains predominantly high-mannose glycans.

It is found in the cell membrane. Functionally, functional component of the Nogo receptor signaling complex (RTN4R/NGFR) in RhoA activation responsible for some inhibition of axonal regeneration by myelin-associated factors. Is also an important negative regulator of oligodentrocyte differentiation and axonal myelination. Acts in conjunction with RTN4 and RTN4R in regulating neuronal precursor cell motility during cortical development. This Macaca fascicularis (Crab-eating macaque) protein is Leucine-rich repeat and immunoglobulin-like domain-containing nogo receptor-interacting protein 1 (LINGO1).